A 630-amino-acid polypeptide reads, in one-letter code: Sodium-dependent serotonin transporter (630 aa).

The Cytoplasmic portion of the chain corresponds to 1 to 87 (METTALNSQK…ERETWGKKVD (87 aa)). Tyrosine 47 bears the Phosphotyrosine mark. The chain crosses the membrane as a helical span at residues 88–112 (FLLSVIGYAVDLGNIWRFPYVCYQN). Na(+) is bound by residues glycine 94, alanine 96, valine 97, aspartate 98, and asparagine 101. Aspartate 98 provides a ligand contact to serotonin. Residues 113–115 (GGG) are Extracellular-facing. A helical transmembrane segment spans residues 116–135 (AFLLPYIIMAIFGGIPLFYM). The Cytoplasmic portion of the chain corresponds to 136 to 160 (ELALGQYHRNGCISIWRKICPIFKG). Tyrosine 142 bears the Phosphotyrosine mark. Residues 161-186 (IGYTICIIAFYIASYYNTIIAWALYY) traverse the membrane as a helical segment. Residues 187 to 252 (LISSFTDRLP…KGLQDVGGVS (66 aa)) are Extracellular-facing. A disulfide bridge connects residues cysteine 200 and cysteine 209. Asparagine 208 and asparagine 217 each carry an N-linked (GlcNAc...) asparagine glycan. Residues 253–271 (WQLTLCIMLIFTIIYFSIW) traverse the membrane as a helical segment. The Cytoplasmic portion of the chain corresponds to 272–277 (KGVKTS). At threonine 276 the chain carries Phosphothreonine. Residues 278–297 (GKVVWVTATFPYIVLSVLLV) traverse the membrane as a helical segment. Residues 298–324 (RGATLPGAWKGVLFYLKPNWQKLLETG) lie on the Extracellular side of the membrane. A helical transmembrane segment spans residues 325-347 (VWIDAAAQIFFSLGPGFGVLLAF). A Na(+)-binding site is contributed by serine 336. Topologically, residues 348 to 360 (ASYNKFNNNCYQD) are cytoplasmic. A helical membrane pass occupies residues 361-380 (ALVTSAVNCMTSFVSGFVIF). Asparagine 368 provides a ligand contact to Na(+). Over 381–421 (TVLGYMAEMRSEDVSEVAKDAGPSLLFITYAEAIANMPAST) the chain is Extracellular. A helical membrane pass occupies residues 422–443 (FFAIIFFLMLITLGLDSTFAGL). Residues leucine 434, aspartate 437, and serine 438 each contribute to the Na(+) site. Threonine 439 contributes to the serotonin binding site. The Cytoplasmic segment spans residues 444–463 (EGVITAVLDEFPHIWAKHRE). Residues 464–483 (WFVLAVVITCFFGSLTTLTF) form a helical membrane-spanning segment. Residues 484–494 (GGAYVVKLLEE) lie on the Extracellular side of the membrane. Positions 494 and 495 each coordinate serotonin. Residues 495–516 (YATGPAVLTVVFIEAIAVSWFY) traverse the membrane as a helical segment. Residues 517 to 538 (GVTQFCSDVKEMLGFSPGWFWR) are Cytoplasmic-facing. Residues 539–558 (ICWVAVSPVFLLFIICSFLM) traverse the membrane as a helical segment. The serotonin site is built by phenylalanine 556 and serine 559. Over 559–574 (SPPQLRLFQYSYPHWS) the chain is Extracellular. A helical transmembrane segment spans residues 575-595 (VILGYCIGTSSVICIPTYITY). At 596–630 (RLVTTPGTLKERIIKSITPETPTEIPCGDICLNAV) the chain is on the cytoplasmic side. Residues 616–624 (TPTEIPCGD) are interaction with RAB4A.

The protein belongs to the sodium:neurotransmitter symporter (SNF) (TC 2.A.22) family. SLC6A4 subfamily. As to quaternary structure, monomer or homooligomer. Interacts (via C-terminus) with SCAMP2; the interaction is direct and retains transporter molecules intracellularly. Interacts with filamentous actin and STX1A. Interacts (via the N-terminus) with STX1A (via the H3 domain); this interaction regulates SLC4A6 channel conductance. Interacts with SEC23A, SEC24C and PATJ. Interacts with NOS1; the interaction may diminish the cell surface localization of SERT in the brain and, correspondingly, reduce serotonin reuptake. Interacts with TGFB1I1. Interacts with ITGAV:ITGB3. Interacts (via C-terminus) with ITGB3; this interaction regulates SLC6A4 trafficking. Phosphorylation at Thr-276 increases 5-HT uptake and is required for cGMP-mediated SERT regulation. In terms of tissue distribution, expressed in the intestinal crypt epithelial cells (at protein level).

Its subcellular location is the cell membrane. The protein resides in the endomembrane system. The protein localises to the endosome membrane. It is found in the synapse. It localises to the cell junction. Its subcellular location is the focal adhesion. The protein resides in the cell projection. The protein localises to the neuron projection. The catalysed reaction is serotonin(out) + K(+)(in) + Na(+)(out) + H(+)(in) = serotonin(in) + K(+)(out) + Na(+)(in) + H(+)(out). Its function is as follows. Serotonin transporter that cotransports serotonin with one Na(+) ion in exchange for one K(+) ion and possibly one proton in an overall electroneutral transport cycle. Transports serotonin across the plasma membrane from the extracellular compartment to the cytosol thus limiting serotonin intercellular signaling. Essential for serotonin homeostasis in the central nervous system. In the developing somatosensory cortex, acts in glutamatergic neurons to control serotonin uptake and its trophic functions accounting for proper spatial organization of cortical neurons and elaboration of sensory circuits. In the mature cortex, acts primarily in brainstem raphe neurons to mediate serotonin uptake from the synaptic cleft back into the pre-synaptic terminal thus terminating serotonin signaling at the synapse. Modulates mucosal serotonin levels in the gastrointestinal tract through uptake and clearance of serotonin in enterocytes. Required for enteric neurogenesis and gastrointestinal reflexes. Regulates blood serotonin levels by ensuring rapid high affinity uptake of serotonin from plasma to platelets, where it is further stored in dense granules via vesicular monoamine transporters and then released upon stimulation. Mechanistically, the transport cycle starts with an outward-open conformation having Na1(+) and Cl(-) sites occupied. The binding of a second extracellular Na2(+) ion and serotonin substrate leads to structural changes to outward-occluded to inward-occluded to inward-open, where the Na2(+) ion and serotonin are released into the cytosol. Binding of intracellular K(+) ion induces conformational transitions to inward-occluded to outward-open and completes the cycle by releasing K(+) possibly together with a proton bound to Asp-98 into the extracellular compartment. Na1(+) and Cl(-) ions remain bound throughout the transport cycle. Additionally, displays serotonin-induced channel-like conductance for monovalent cations, mainly Na(+) ions. The channel activity is uncoupled from the transport cycle and may contribute to the membrane resting potential or excitability. The protein is Sodium-dependent serotonin transporter (SLC6A4) of Cavia porcellus (Guinea pig).